The following is a 377-amino-acid chain: Glutamate 5-kinase (377 aa).

Residue Lys-22 coordinates ATP. Substrate-binding residues include Ser-62, Asp-149, and Asn-161. ATP-binding positions include 181-182 (TD) and 223-229 (TGGMVTK). The region spanning 285–359 (QGTLVADSGA…GRNTAQLKRF (75 aa)) is the PUA domain.

It belongs to the glutamate 5-kinase family.

The protein resides in the cytoplasm. It catalyses the reaction L-glutamate + ATP = L-glutamyl 5-phosphate + ADP. It functions in the pathway amino-acid biosynthesis; L-proline biosynthesis; L-glutamate 5-semialdehyde from L-glutamate: step 1/2. In terms of biological role, catalyzes the transfer of a phosphate group to glutamate to form L-glutamate 5-phosphate. This chain is Glutamate 5-kinase, found in Bifidobacterium adolescentis (strain ATCC 15703 / DSM 20083 / NCTC 11814 / E194a).